The sequence spans 280 residues: Elongation factor 1-delta (280 aa).

Alanine 2 carries the N-acetylalanine modification. Lysine 17 is modified (N6-acetyllysine). Residues serine 37, serine 44, serine 60, serine 86, and serine 106 each carry the phosphoserine modification. Lysine 107 carries the N6-acetyllysine modification. The segment at 113-171 (SALEKSSPAHRATTPQTQHVSPMRQVEPPSRKAATATEDDEDDDIDLFGSDEEEDKEAT) is disordered. At lysine 117 the chain carries N6-acetyllysine; alternate. Lysine 117 carries the N6-succinyllysine; alternate modification. Serine 119 bears the Phosphoserine mark. Threonine 129 carries the phosphothreonine modification. Serine 133 carries the phosphoserine modification. Position 147 is a phosphothreonine (threonine 147). Over residues 149 to 168 (TEDDEDDDIDLFGSDEEEDK) the composition is skewed to acidic residues. The residue at position 162 (serine 162) is a Phosphoserine; by CK2.

It belongs to the EF-1-beta/EF-1-delta family. In terms of assembly, EF-1 is composed of 4 subunits: alpha, beta, delta, and gamma.

In terms of biological role, EF-1-beta and EF-1-delta stimulate the exchange of GDP bound to EF-1-alpha to GTP. In Bos taurus (Bovine), this protein is Elongation factor 1-delta (EEF1D).